A 154-amino-acid polypeptide reads, in one-letter code: MAARLCCQLDPARDVLCLRPVGAESRGRPFSGPLGTLPSPSSSAVPADHGAHLSLRGLPVCAFSSAGPCALRFTFARRMETTVNAHQVLPKVLHKRTLGLSAMSTTDLEAYFKDCVFKDWEELGEEIRLKVFVLGGCRHKLVCSPAPCNFFTSA.

Residues 68 to 117 (PCALRFTFARRMETTVNAHQVLPKVLHKRTLGLSAMSTTDLEAYFKDCVF) form a mitochondrial targeting sequence region.

This sequence belongs to the orthohepadnavirus protein X family. May form homodimer. May interact with host CEBPA, CFLAR, CREB1, DDB1, E4F1, HBXIP, HSPD1/HSP60, NFKBIA, POLR2E and SMAD4. Interacts with host SMC5-SMC6 complex and induces its degradation. Interacts with host TRPC4AP; leading to prevent ubiquitination of TRPC4AP. Interacts with host PLSCR1; this interaction promotes ubiquitination and degradation of HBx and impairs HBx-mediated cell proliferation. In terms of processing, a fraction may be phosphorylated in insect cells and HepG2 cells, a human hepatoblastoma cell line. Phosphorylated in vitro by host protein kinase C or mitogen-activated protein kinase. N-acetylated in insect cells.

Its subcellular location is the host cytoplasm. The protein resides in the host nucleus. It is found in the host mitochondrion. Its function is as follows. Multifunctional protein that plays a role in silencing host antiviral defenses and promoting viral transcription. Does not seem to be essential for HBV infection. May be directly involved in development of cirrhosis and liver cancer (hepatocellular carcinoma). Most of cytosolic activities involve modulation of cytosolic calcium. The effect on apoptosis is controversial depending on the cell types in which the studies have been conducted. May induce apoptosis by localizing in mitochondria and causing loss of mitochondrial membrane potential. May also modulate apoptosis by binding host CFLAR, a key regulator of the death-inducing signaling complex (DISC). Promotes viral transcription by using the host E3 ubiquitin ligase DDB1 to target the SMC5-SMC6 complex to proteasomal degradation. This host complex would otherwise bind to viral episomal DNA, and prevents its transcription. Moderately stimulates transcription of many different viral and cellular transcription elements. Promoters and enhancers stimulated by HBx contain DNA binding sites for NF-kappa-B, AP-1, AP-2, c-EBP, ATF/CREB, or the calcium-activated factor NF-AT. This Hepatitis B virus genotype C subtype ayw (isolate China/Tibet127/2002) (HBV-C) protein is Protein X.